The sequence spans 177 residues: Peptidyl-tRNA hydrolase (177 aa).

A tRNA-binding site is contributed by tyrosine 14. Histidine 19 functions as the Proton acceptor in the catalytic mechanism. TRNA-binding residues include phenylalanine 64, asparagine 66, and asparagine 112.

The protein belongs to the PTH family. In terms of assembly, monomer.

It is found in the cytoplasm. It carries out the reaction an N-acyl-L-alpha-aminoacyl-tRNA + H2O = an N-acyl-L-amino acid + a tRNA + H(+). Functionally, hydrolyzes ribosome-free peptidyl-tRNAs (with 1 or more amino acids incorporated), which drop off the ribosome during protein synthesis, or as a result of ribosome stalling. Its function is as follows. Catalyzes the release of premature peptidyl moieties from peptidyl-tRNA molecules trapped in stalled 50S ribosomal subunits, and thus maintains levels of free tRNAs and 50S ribosomes. The protein is Peptidyl-tRNA hydrolase of Latilactobacillus sakei (Lactobacillus sakei).